Reading from the N-terminus, the 94-residue chain is Integration host factor subunit beta (94 aa).

Belongs to the bacterial histone-like protein family. In terms of assembly, heterodimer of an alpha and a beta chain.

Its function is as follows. This protein is one of the two subunits of integration host factor, a specific DNA-binding protein that functions in genetic recombination as well as in transcriptional and translational control. This Brucella abortus (strain S19) protein is Integration host factor subunit beta.